Consider the following 239-residue polypeptide: Tetraspanin-9 (239 aa).

Transmembrane regions (helical) follow at residues 14–34, 56–76, and 86–106; these read FLFN…GIWL, LVIA…LGAI, and FFIV…LFFV. N-linked (GlcNAc...) asparagine glycosylation is found at Asn180 and Asn181. The chain crosses the membrane as a helical span at residues 204-224; the sequence is VLGTVGMCLLITQILGMAFSM.

This sequence belongs to the tetraspanin (TM4SF) family. In terms of assembly, found in a complex with GP6. In terms of processing, glycosylated.

The protein localises to the membrane. This Ovis aries (Sheep) protein is Tetraspanin-9 (TSPAN9).